Consider the following 410-residue polypeptide: Translation initiation factor 2 subunit gamma (410 aa).

The tr-type G domain maps to 6–203 (QSEVNIGMVG…AIQEFIPTPE (198 aa)). Residues 15–22 (GHVDHGKT) form a G1 region. 4 residues coordinate Mg(2+): Asp18, Thr22, Gly43, and Ser45. 18 to 23 (DHGKTS) is a GTP binding site. Residues 43–47 (GISIR) are G2. Zn(2+) is bound by residues Cys58, Cys61, Cys73, and Cys76. Positions 90 to 93 (DAPG) are G3. Residues 146-149 (NKID) and 181-183 (SAH) each bind GTP. A G4 region spans residues 146 to 149 (NKID). Residues 181–183 (SAH) form a G5 region.

The protein belongs to the TRAFAC class translation factor GTPase superfamily. Classic translation factor GTPase family. EIF2G subfamily. Heterotrimer composed of an alpha, a beta and a gamma chain. It depends on Mg(2+) as a cofactor.

It carries out the reaction GTP + H2O = GDP + phosphate + H(+). Functionally, eIF-2 functions in the early steps of protein synthesis by forming a ternary complex with GTP and initiator tRNA. This chain is Translation initiation factor 2 subunit gamma, found in Methanococcus maripaludis (strain C7 / ATCC BAA-1331).